Consider the following 499-residue polypeptide: Probable malate:quinone oxidoreductase 4 (499 aa).

The protein belongs to the MQO family. FAD is required as a cofactor.

The enzyme catalyses (S)-malate + a quinone = a quinol + oxaloacetate. It functions in the pathway carbohydrate metabolism; tricarboxylic acid cycle; oxaloacetate from (S)-malate (quinone route): step 1/1. In Staphylococcus epidermidis (strain ATCC 35984 / DSM 28319 / BCRC 17069 / CCUG 31568 / BM 3577 / RP62A), this protein is Probable malate:quinone oxidoreductase 4.